The primary structure comprises 127 residues: Small ribosomal subunit protein uS11 (127 aa).

The protein belongs to the universal ribosomal protein uS11 family. Part of the 30S ribosomal subunit. Interacts with proteins S7 and S18. Binds to IF-3.

Functionally, located on the platform of the 30S subunit, it bridges several disparate RNA helices of the 16S rRNA. Forms part of the Shine-Dalgarno cleft in the 70S ribosome. The protein is Small ribosomal subunit protein uS11 of Rickettsia prowazekii (strain Madrid E).